The following is an 84-amino-acid chain: Putative UPF0320 protein YNL337W (84 aa).

The protein belongs to the UPF0320 family.

This Saccharomyces cerevisiae (strain ATCC 204508 / S288c) (Baker's yeast) protein is Putative UPF0320 protein YNL337W.